The following is a 646-amino-acid chain: Cell surface glycoprotein MUC18 (646 aa).

The first 23 residues, 1-23, serve as a signal peptide directing secretion; the sequence is MGLPRLVCAFLLAACCCCPRVAG. Ig-like V-type domains follow at residues 24 to 129 and 139 to 242; these read VPGE…YRIQ and PNIQ…REVT. The Extracellular segment spans residues 24–559; the sequence is VPGEAEQPAP…RKLPEPESRG (536 aa). 4 cysteine pairs are disulfide-bonded: Cys-48–Cys-116, Cys-161–Cys-223, Cys-272–Cys-320, and Cys-365–Cys-407. Residue Asn-56 is glycosylated (N-linked (GlcNAc...) asparagine). 3 Ig-like C2-type domains span residues 244–330, 335–424, and 430–510; these read PVFY…TMIS, PQEL…QLVN, and PPWM…KNTS. The interval 278 to 299 is disordered; the sequence is PPPHFSISKQNPSTREAEEETT. N-linked (GlcNAc...) asparagine glycosylation is found at Asn-418, Asn-449, Asn-467, Asn-508, Asn-518, Asn-527, and Asn-544. A disulfide bridge connects residues Cys-452 and Cys-499. The segment at 525-554 is disordered; that stretch reads DSNTTTGLSTSTASPHTRANSTSTERKLPE. Over residues 533–547 the composition is skewed to polar residues; the sequence is STSTASPHTRANSTS. Residues 560–583 form a helical membrane-spanning segment; that stretch reads VVIVAVIVCILVLAVLGAVLYFLY. At 584–646 the chain is on the cytoplasmic side; that stretch reads KKGKLPCRRS…QGEKYIDLRH (63 aa). Phosphoserine occurs at positions 606, 614, and 628. The tract at residues 620 to 646 is disordered; it reads EMGLLQGSSGDKRAPGDQGEKYIDLRH. Over residues 629–646 the composition is skewed to basic and acidic residues; sequence GDKRAPGDQGEKYIDLRH.

As to expression, detected in endothelial cells in vascular tissue throughout the body. May appear at the surface of neural crest cells during their embryonic migration. Appears to be limited to vascular smooth muscle in normal adult tissues. Associated with tumor progression and the development of metastasis in human malignant melanoma. Expressed most strongly on metastatic lesions and advanced primary tumors and is only rarely detected in benign melanocytic nevi and thin primary melanomas with a low probability of metastasis.

Its subcellular location is the membrane. Functionally, plays a role in cell adhesion, and in cohesion of the endothelial monolayer at intercellular junctions in vascular tissue. Its expression may allow melanoma cells to interact with cellular elements of the vascular system, thereby enhancing hematogeneous tumor spread. Could be an adhesion molecule active in neural crest cells during embryonic development. Acts as a surface receptor that triggers tyrosine phosphorylation of FYN and PTK2/FAK1, and a transient increase in the intracellular calcium concentration. This is Cell surface glycoprotein MUC18 (MCAM) from Homo sapiens (Human).